Consider the following 441-residue polypeptide: MISRIDLRGDALPEGSALRDLLPRADFDVSAALEKVRPICEAVHHRGDAALIDFAEKFDGVRLESVRVPARALADALEQLDPAVRAALEESIRRARLVHREQRRTTHTTQVVPGGSVTEKWVPVDRVGLYAPGGRSVYPSSVVMNVVPAQEAGVESIALASPAQAEFGGLPHPTILAACALLGVDEVYAAGGATAVAMFAYGTESCAPADMVTGPGNIWVAAAKRYFTGKIGIDAEAGPTEIAVLADSTADPVHVASDLISQAEHDPLAAAVLVTDSVELADAVEKELEPQVAATKHIDDRIVPALKGRQSAIVLVDGVDEGLRVVDAYGAEHLEIQTADAAAVADRVRNAGAIFIGPWAPVSLGDYAAGSNHVLPTGGCACHSSGLSVQSFLRGIHIVDYTKDALADVAHHVVTLAEAEDLPAHGAAIKARFGWKVPESK.

Substrate is bound by residues T240, Q262, and H265. The Zn(2+) site is built by Q262 and H265. Residues E332 and H333 each act as proton acceptor in the active site. H333, D366, E420, and H425 together coordinate substrate. Position 366 (D366) interacts with Zn(2+). H425 is a binding site for Zn(2+).

The protein belongs to the histidinol dehydrogenase family. The cofactor is Zn(2+).

It carries out the reaction L-histidinol + 2 NAD(+) + H2O = L-histidine + 2 NADH + 3 H(+). It participates in amino-acid biosynthesis; L-histidine biosynthesis; L-histidine from 5-phospho-alpha-D-ribose 1-diphosphate: step 9/9. Catalyzes the sequential NAD-dependent oxidations of L-histidinol to L-histidinaldehyde and then to L-histidine. The chain is Histidinol dehydrogenase from Streptomyces avermitilis (strain ATCC 31267 / DSM 46492 / JCM 5070 / NBRC 14893 / NCIMB 12804 / NRRL 8165 / MA-4680).